The sequence spans 488 residues: Envelope glycoprotein gp62 (488 aa).

Residues 1–20 (MGKFLATLILFFQFCPLILG) form the signal peptide. Topologically, residues 21–442 (DYSPSCCTLT…LGLSQWAREA (422 aa)) are extracellular. Asn140 and Asn222 each carry an N-linked (GlcNAc...) asparagine; by host glycan. A CXXC motif is present at residues 225 to 228 (CIVC). 3 cysteine pairs are disulfide-bonded: Cys225-Cys228, Cys225-Cys401, and Cys393-Cys400. N-linked (GlcNAc...) asparagine; by host glycans are attached at residues Asn244 and Asn272. Residues 313–333 (AVPVAVWLVSALAMGAGVAGG) form a fusion peptide region. The segment at 327–339 (GAGVAGGITGSMS) is gly-rich. 2 coiled-coil regions span residues 340–385 (LASG…LDLL) and 397–429 (QEQC…GWGL). An immunosuppression region spans residues 376–392 (AQNRRGLDLLFWEQGGL). The CX6CC motif lies at 393–401 (CKALQEQCC). A glycan (N-linked (GlcNAc...) asparagine; by host) is linked at Asn404. The chain crosses the membrane as a helical span at residues 443–463 (LQTGITLVALLLLVILAGPCI). Cys462 is lipidated: S-palmitoyl cysteine; by host. Residues 464–488 (LRQLRHLPSRVRYPHYSLINPESSL) are Cytoplasmic-facing.

The mature envelope protein (Env) consists of a trimer of SU-TM heterodimers attached by a labile interchain disulfide bond. Post-translationally, specific enzymatic cleavages in vivo yield mature proteins. Envelope glycoproteins are synthesized as an inactive precursor that is N-glycosylated and processed likely by host cell furin or by a furin-like protease in the Golgi to yield the mature SU and TM proteins. The cleavage site between SU and TM requires the minimal sequence [KR]-X-[KR]-R. The CXXC motif is highly conserved across a broad range of retroviral envelope proteins. It is thought to participate in the formation of a labile disulfide bond possibly with the CX6CC motif present in the transmembrane protein. Isomerization of the intersubunit disulfide bond to an SU intrachain disulfide bond is thought to occur upon receptor recognition in order to allow membrane fusion. In terms of processing, the transmembrane protein is palmitoylated.

It is found in the virion membrane. The protein resides in the host cell membrane. In terms of biological role, the surface protein (SU) attaches the virus to the host cell by binding to its receptor. This interaction triggers the refolding of the transmembrane protein (TM) and is thought to activate its fusogenic potential by unmasking its fusion peptide. Fusion occurs at the host cell plasma membrane. The transmembrane protein (TM) acts as a class I viral fusion protein. Under the current model, the protein has at least 3 conformational states: pre-fusion native state, pre-hairpin intermediate state, and post-fusion hairpin state. During viral and target cell membrane fusion, the coiled coil regions (heptad repeats) assume a trimer-of-hairpins structure, positioning the fusion peptide in close proximity to the C-terminal region of the ectodomain. The formation of this structure appears to drive apposition and subsequent fusion of viral and target cell membranes. Membranes fusion leads to delivery of the nucleocapsid into the cytoplasm. The sequence is that of Envelope glycoprotein gp62 (env) from Human T-cell leukemia virus 1 (strain Japan MT-2 subtype A) (HTLV-1).